Consider the following 159-residue polypeptide: Elicitor-responsive protein 1 (159 aa).

Residues 1-112 (MAGSGVLEVH…SLGMEHGTWE (112 aa)) enclose the C2 domain. Residues D21 and D30 each contribute to the Ca(2+) site. Residue S44 is modified to Phosphoserine; by CPK. Ca(2+) is bound by residues D81, D83, S86, and D89.

Ca(2+) serves as cofactor. Phosphorylated at Ser-44 by CPK18 in a calcium-dependent manner. As to expression, isoform 2 is expressed in young vascular tissues and tiller buds.

It localises to the cytoplasm. Its subcellular location is the cell membrane. May play a role in plant defense signaling. Isoform 2 binds to phospholipids in a Ca(2+)-dependent manner in response to pathogen elicitors. The sequence is that of Elicitor-responsive protein 1 (ERG1) from Oryza sativa subsp. japonica (Rice).